Reading from the N-terminus, the 362-residue chain is Variable large protein 25 (362 aa).

The N-terminal stretch at 1–26 is a signal peptide; it reads MRKRISAIINKLNISIMMMIVVLMIG. Residue Cys27 is the site of N-palmitoyl cysteine attachment. Cys27 carries the S-diacylglycerol cysteine lipid modification.

Belongs to the variable large protein (Vlp) family. Alpha subfamily.

The protein localises to the cell outer membrane. Its function is as follows. The Vlp and Vsp proteins are antigenically distinct proteins, only one vlp or vsp gene is transcriptionally active at any one time. Switching between these genes is a mechanism of host immune response evasion. This is Variable large protein 25 from Borrelia hermsii.